Reading from the N-terminus, the 390-residue chain is MASTEIMTVNMGPQHPSTHGVLRMVIELDGEVIQKITPHIGYLHRGVEKLSEHRTYHQTIPLTDRLDYLAPMSNNLGYVLAVEKLLGIEIPERAQTIRVIMAELTRLKSHLVWIACHALDIGAMTVFIYAFREREMIMSLYEKISGARMTSNYFRVGGLSSDVYDGFEKDVREVIDTFPGHFDTYEGLLTKNTIWVNRTVGNGVISAEDAVDYGITGPALRGSGVDWDLRRDNPYSGYEKYSFKVPVGEKCDTFDRYKVRLIEMREAVNIIRQALDSLKPGPVLADNPQVTYPPKENVYNSIEGLIHHFKIASEGFPVPEGEVYQSVEAPKGELGYYIVSDGGPKPYRMRIRPPSFVNLGAIEKMAKGSMIADLVAVIGTLDIVLGEIDR.

Belongs to the complex I 49 kDa subunit family. In terms of assembly, NDH-1 is composed of 14 different subunits. Subunits NuoB, C, D, E, F, and G constitute the peripheral sector of the complex.

Its subcellular location is the cell inner membrane. It catalyses the reaction a quinone + NADH + 5 H(+)(in) = a quinol + NAD(+) + 4 H(+)(out). Its function is as follows. NDH-1 shuttles electrons from NADH, via FMN and iron-sulfur (Fe-S) centers, to quinones in the respiratory chain. The immediate electron acceptor for the enzyme in this species is believed to be ubiquinone. Couples the redox reaction to proton translocation (for every two electrons transferred, four hydrogen ions are translocated across the cytoplasmic membrane), and thus conserves the redox energy in a proton gradient. This chain is NADH-quinone oxidoreductase subunit D, found in Geobacter sulfurreducens (strain ATCC 51573 / DSM 12127 / PCA).